The chain runs to 957 residues: UvrABC system protein A (957 aa).

Residue 33 to 40 (GLSGSGKS) participates in ATP binding. Residues 252-279 (CPHCGFSIGELEPRLFSFNSPFGACPTC) form a C4-type zinc finger. ABC transporter domains follow at residues 309–587 (WTPI…PNSL) and 607–935 (PDGR…RYLK). Position 639–646 (639–646 (GVSGSGKS)) interacts with ATP. The segment at 738–764 (CEACRGDGIIKIEMHFLPDVYVPCEVC) adopts a C4-type zinc-finger fold.

This sequence belongs to the ABC transporter superfamily. UvrA family. As to quaternary structure, forms a heterotetramer with UvrB during the search for lesions.

Its subcellular location is the cytoplasm. The UvrABC repair system catalyzes the recognition and processing of DNA lesions. UvrA is an ATPase and a DNA-binding protein. A damage recognition complex composed of 2 UvrA and 2 UvrB subunits scans DNA for abnormalities. When the presence of a lesion has been verified by UvrB, the UvrA molecules dissociate. This chain is UvrABC system protein A, found in Bacillus subtilis (strain 168).